The following is a 416-amino-acid chain: D-amino acid dehydrogenase (416 aa).

An FAD-binding site is contributed by 3-17 (ITILGSGVIGVTTAY).

Belongs to the DadA oxidoreductase family. FAD is required as a cofactor.

It catalyses the reaction a D-alpha-amino acid + A + H2O = a 2-oxocarboxylate + AH2 + NH4(+). The protein operates within amino-acid degradation; D-alanine degradation; NH(3) and pyruvate from D-alanine: step 1/1. In terms of biological role, oxidative deamination of D-amino acids. This chain is D-amino acid dehydrogenase, found in Brucella anthropi (strain ATCC 49188 / DSM 6882 / CCUG 24695 / JCM 21032 / LMG 3331 / NBRC 15819 / NCTC 12168 / Alc 37) (Ochrobactrum anthropi).